Reading from the N-terminus, the 392-residue chain is Phospho-N-acetylmuramoyl-pentapeptide-transferase (392 aa).

Transmembrane regions (helical) follow at residues 29–49 (AVLA…WVIG), 76–96 (TMGG…WFDL), 100–120 (FVWI…VDDW), 137–157 (YLWQ…CISE), 192–212 (AVSY…VIVG), 225–245 (GLAI…AYVT), 262–282 (SGEL…FLWF), 289–309 (VFMG…IAII), 314–334 (IVLA…MLQV), and 369–389 (QVVV…LSTL).

This sequence belongs to the glycosyltransferase 4 family. MraY subfamily. It depends on Mg(2+) as a cofactor.

Its subcellular location is the cell inner membrane. The catalysed reaction is UDP-N-acetyl-alpha-D-muramoyl-L-alanyl-gamma-D-glutamyl-meso-2,6-diaminopimeloyl-D-alanyl-D-alanine + di-trans,octa-cis-undecaprenyl phosphate = di-trans,octa-cis-undecaprenyl diphospho-N-acetyl-alpha-D-muramoyl-L-alanyl-D-glutamyl-meso-2,6-diaminopimeloyl-D-alanyl-D-alanine + UMP. It functions in the pathway cell wall biogenesis; peptidoglycan biosynthesis. In terms of biological role, catalyzes the initial step of the lipid cycle reactions in the biosynthesis of the cell wall peptidoglycan: transfers peptidoglycan precursor phospho-MurNAc-pentapeptide from UDP-MurNAc-pentapeptide onto the lipid carrier undecaprenyl phosphate, yielding undecaprenyl-pyrophosphoryl-MurNAc-pentapeptide, known as lipid I. The polypeptide is Phospho-N-acetylmuramoyl-pentapeptide-transferase (Verminephrobacter eiseniae (strain EF01-2)).